Reading from the N-terminus, the 170-residue chain is 2S seed storage protein 2 (170 aa).

An N-terminal signal peptide occupies residues 1–21 (MANKLFLVCATFALCFLLTNA). Propeptides lie at residues 22–37 (SIYR…DASN) and 73–88 (GPSL…DIEN).

It belongs to the 2S seed storage albumins family. As to quaternary structure, the mature protein consists of a small and a large chain linked by disulfide bonds.

This is a 2S seed storage protein. The protein is 2S seed storage protein 2 (AT2S2) of Arabidopsis thaliana (Mouse-ear cress).